The chain runs to 103 residues: N(4)-acetylcytidine amidohydrolase (103 aa).

An ASCH domain is found at 6–94 (ITFFQRFQND…IAEIYPNQTQ (89 aa)). K21 functions as the Proton acceptor in the catalytic mechanism. T24 acts as the Nucleophile in catalysis. Catalysis depends on E74, which acts as the Proton donor.

The protein belongs to the N(4)-acetylcytidine amidohydrolase family.

The catalysed reaction is N(4)-acetylcytidine + H2O = cytidine + acetate + H(+). The enzyme catalyses N(4)-acetyl-2'-deoxycytidine + H2O = 2'-deoxycytidine + acetate + H(+). It catalyses the reaction N(4)-acetylcytosine + H2O = cytosine + acetate + H(+). In terms of biological role, catalyzes the hydrolysis of N(4)-acetylcytidine (ac4C). The chain is N(4)-acetylcytidine amidohydrolase (yqfB) from Salmonella typhi.